Consider the following 271-residue polypeptide: Tryptophan synthase alpha chain (271 aa).

Active-site proton acceptor residues include Glu49 and Asp60.

The protein belongs to the TrpA family. As to quaternary structure, tetramer of two alpha and two beta chains.

The enzyme catalyses (1S,2R)-1-C-(indol-3-yl)glycerol 3-phosphate + L-serine = D-glyceraldehyde 3-phosphate + L-tryptophan + H2O. Its pathway is amino-acid biosynthesis; L-tryptophan biosynthesis; L-tryptophan from chorismate: step 5/5. In terms of biological role, the alpha subunit is responsible for the aldol cleavage of indoleglycerol phosphate to indole and glyceraldehyde 3-phosphate. This Aromatoleum aromaticum (strain DSM 19018 / LMG 30748 / EbN1) (Azoarcus sp. (strain EbN1)) protein is Tryptophan synthase alpha chain.